Consider the following 208-residue polypeptide: Uracil phosphoribosyltransferase (208 aa).

Residues R78, R103, and 130–138 contribute to the 5-phospho-alpha-D-ribose 1-diphosphate site; that span reads DPMLATANS. Uracil-binding positions include I193 and 198-200; that span reads GDA. D199 contributes to the 5-phospho-alpha-D-ribose 1-diphosphate binding site.

It belongs to the UPRTase family. Mg(2+) serves as cofactor.

The enzyme catalyses UMP + diphosphate = 5-phospho-alpha-D-ribose 1-diphosphate + uracil. It functions in the pathway pyrimidine metabolism; UMP biosynthesis via salvage pathway; UMP from uracil: step 1/1. Allosterically activated by GTP. In terms of biological role, catalyzes the conversion of uracil and 5-phospho-alpha-D-ribose 1-diphosphate (PRPP) to UMP and diphosphate. This Brucella ovis (strain ATCC 25840 / 63/290 / NCTC 10512) protein is Uracil phosphoribosyltransferase.